Consider the following 831-residue polypeptide: Periplasmic nitrate reductase (831 aa).

A signal peptide (tat-type signal) is located at residues 1–29 (MTLTRRDLIKAQAAATAAAAAGLPVSALA). The 57-residue stretch at 41-97 (IRWSKAPCRFCGTGCGVMVGTRDGQVVATHGDTQAEVNRGLNCVKGYFLSKIMYGED) folds into the 4Fe-4S Mo/W bis-MGD-type domain. The [4Fe-4S] cluster site is built by Cys48, Cys51, Cys55, and Cys83. Mo-bis(molybdopterin guanine dinucleotide) contacts are provided by residues Lys85, Gln152, Asn177, Cys181, 214-221 (WGSNMAEM), 245-249 (STFTH), 264-266 (GTD), Met375, Gln379, Asn485, 511-512 (SD), Lys534, Asp561, and 721-730 (TGRVLEHWHS). Trp797 serves as a coordination point for substrate. Mo-bis(molybdopterin guanine dinucleotide) is bound by residues Asn805 and Lys822.

This sequence belongs to the prokaryotic molybdopterin-containing oxidoreductase family. NasA/NapA/NarB subfamily. As to quaternary structure, component of the periplasmic nitrate reductase NapAB complex composed of NapA and NapB. [4Fe-4S] cluster is required as a cofactor. It depends on Mo-bis(molybdopterin guanine dinucleotide) as a cofactor. Predicted to be exported by the Tat system. The position of the signal peptide cleavage has not been experimentally proven.

The protein localises to the periplasm. The enzyme catalyses 2 Fe(II)-[cytochrome] + nitrate + 2 H(+) = 2 Fe(III)-[cytochrome] + nitrite + H2O. Functionally, catalytic subunit of the periplasmic nitrate reductase complex NapAB. Receives electrons from NapB and catalyzes the reduction of nitrate to nitrite. In Cereibacter sphaeroides (strain ATCC 17023 / DSM 158 / JCM 6121 / CCUG 31486 / LMG 2827 / NBRC 12203 / NCIMB 8253 / ATH 2.4.1.) (Rhodobacter sphaeroides), this protein is Periplasmic nitrate reductase.